Consider the following 832-residue polypeptide: Serine/threonine-protein kinase Doa (832 aa).

4 disordered regions span residues 1–86 (MVAA…SKYI), 135–158 (LLQH…QQYP), 179–215 (SDPF…KQAP), and 258–419 (SKIG…QLQQ). Polar residues predominate over residues 8–18 (VPTSSSSSAAT). Positions 20 to 32 (RQKDVDNKLEKCL) are enriched in basic and acidic residues. Composition is skewed to low complexity over residues 40–53 (TSSN…SNNN), 137–158 (QHQQ…QQYP), and 183–203 (MQQQ…KLQQ). Positions 271-282 (HSASFSSAQRPT) are enriched in polar residues. Composition is skewed to low complexity over residues 285 to 310 (QFHQ…QHQH), 347 to 365 (QMQP…TQFQ), and 396 to 419 (SSSS…QLQQ). One can recognise a Protein kinase domain in the interval 479–799 (YKIMATLGEG…LGEALHHPFF (321 aa)). Residues 485-493 (LGEGTFGRV) and Lys508 each bind ATP. Catalysis depends on Asp605, which acts as the Proton acceptor. The disordered stretch occupies residues 809–832 (GEVSNKQPLSSGSSSRERSHSLSR). Over residues 823 to 832 (SRERSHSLSR) the composition is skewed to basic and acidic residues.

This sequence belongs to the protein kinase superfamily. CMGC Ser/Thr protein kinase family. Lammer subfamily. Interacts (via N-terminus) with x16 (via Arg/Ser-rich region). Interacts with eEF1gamma (via C-terminus); the interaction is probably direct, is transient and leads to phosphorylation of eEF1gamma by Doa. Mg(2+) is required as a cofactor. Post-translationally, autophosphorylated on serine, threonine and tyrosine residues. Ubiquitous expression in embryos. Stage 17 embryos show elevated expression in CNS and brain. Ubiquitous expression in larval imaginal disks. Increased expression posterior to the eye-antennal disk morphogenetic furrow.

It is found in the cytoplasm. Its subcellular location is the cytosol. The protein resides in the nucleus. The catalysed reaction is L-seryl-[protein] + ATP = O-phospho-L-seryl-[protein] + ADP + H(+). It carries out the reaction L-threonyl-[protein] + ATP = O-phospho-L-threonyl-[protein] + ADP + H(+). The enzyme catalyses L-tyrosyl-[protein] + ATP = O-phospho-L-tyrosyl-[protein] + ADP + H(+). In terms of biological role, dual specificity kinase involved in the negative regulation of microtubule-based transport through phsophorylation of the microtuble-binding protein eEF1gamma. May function in the control of alternative splicing by phosphorylating serine/arginine-rich splicing factors, the SR proteins, including x16. Negative regulator of the copia retrotransposon element of the white (w) gene. In the eye, it is required for normal pigmentation, photoreceptor cell development and for organization of interommatidial bristles. Also essential for embryonic segmentation and differentiation of the nervous system. May be the specific isoform involved in regulation of microtubule-based transport through phosphorylation of the microtubule binding protein eEF1gamma. The chain is Serine/threonine-protein kinase Doa from Drosophila melanogaster (Fruit fly).